Consider the following 559-residue polypeptide: Probable D-2-hydroxyglutarate dehydrogenase, mitochondrial (559 aa).

The N-terminal 80 residues, 1–80, are a transit peptide targeting the mitochondrion; sequence MARRAAAGLL…MNFEVQKRSF (80 aa). In terms of domain architecture, FAD-binding PCMH-type spans 131 to 310; sequence YKGSSQLLLL…TKIAILTPAK (180 aa).

The protein belongs to the FAD-binding oxidoreductase/transferase type 4 family. In terms of assembly, homodimer. The cofactor is FAD.

The protein resides in the mitochondrion. It catalyses the reaction (R)-2-hydroxyglutarate + A = 2-oxoglutarate + AH2. In terms of biological role, catalyzes the oxidation of D-2-hydroxyglutarate to alpha-ketoglutarate. The chain is Probable D-2-hydroxyglutarate dehydrogenase, mitochondrial (D2HGDH) from Oryza sativa subsp. indica (Rice).